A 186-amino-acid chain; its full sequence is Probable calcium-binding protein CML25 (186 aa).

Residues 1–17 (MFNKNQGSNGGSSSNVG) are compositionally biased toward low complexity. The segment at 1–23 (MFNKNQGSNGGSSSNVGIGADSP) is disordered. 4 EF-hand domains span residues 33-68 (TEIR…LGHE), 69-104 (VPEE…GMDQ), 106-141 (DVLE…LGDE), and 142-177 (CSIA…GSRR). Residues D46, N48, D50, K52, and E57 each contribute to the Ca(2+) site. Positions 119, 121, 123, 125, 130, 155, 157, 159, 161, and 166 each coordinate Ca(2+).

Its function is as follows. Potential calcium sensor. This Arabidopsis thaliana (Mouse-ear cress) protein is Probable calcium-binding protein CML25 (CML25).